The sequence spans 416 residues: UDP-N-acetylglucosamine 1-carboxyvinyltransferase (416 aa).

22–23 (KN) provides a ligand contact to phosphoenolpyruvate. Arg-91 is a UDP-N-acetyl-alpha-D-glucosamine binding site. Cys-115 functions as the Proton donor in the catalytic mechanism. Cys-115 is subject to 2-(S-cysteinyl)pyruvic acid O-phosphothioketal. UDP-N-acetyl-alpha-D-glucosamine-binding positions include 120 to 124 (RPIDL), Asp-305, and Ile-327.

This sequence belongs to the EPSP synthase family. MurA subfamily.

Its subcellular location is the cytoplasm. It catalyses the reaction phosphoenolpyruvate + UDP-N-acetyl-alpha-D-glucosamine = UDP-N-acetyl-3-O-(1-carboxyvinyl)-alpha-D-glucosamine + phosphate. It participates in cell wall biogenesis; peptidoglycan biosynthesis. Functionally, cell wall formation. Adds enolpyruvyl to UDP-N-acetylglucosamine. The sequence is that of UDP-N-acetylglucosamine 1-carboxyvinyltransferase from Buchnera aphidicola subsp. Acyrthosiphon pisum (strain APS) (Acyrthosiphon pisum symbiotic bacterium).